The following is a 611-amino-acid chain: Solute carrier family 23 member 3 (611 aa).

Over 1-52 the chain is Cytoplasmic; that stretch reads MSRSPLHPIPLLSEGYQDTPAPLPPLLPPLQNPSSRSWASRVFGPSTWGLSC. A helical transmembrane segment spans residues 53-73; sequence LLALQHFLVLASLLWASHLLL. Residues 74–88 are Extracellular-facing; the sequence is LHGLPPGGLSYPPAQ. A helical transmembrane segment spans residues 89 to 109; the sequence is LLASSFFSCGLSTVLQTWMGS. Residues 110 to 168 lie on the Cytoplasmic side of the membrane; that stretch reads RLPLIQAPSLEFLIPALVLTNQKLPLTTKTPGNASLSLPLCSLTRSCHGLELWNTSLRE. Residues 169-189 form a helical membrane-spanning segment; sequence VSGAVVVSGLLQGTIGLLGVP. Residues 190-191 lie on the Extracellular side of the membrane; the sequence is GR. The helical transmembrane segment at 192-212 threads the bilayer; it reads VFPYCGPLVLAPSLVVAGLSA. The Cytoplasmic segment spans residues 213–215; that stretch reads HKE. A helical membrane pass occupies residues 216–236; it reads VAQFCSAHWGLALLLILLMVV. The Extracellular segment spans residues 237–269; it reads CSQHLGSCQIPLCSWRPSSTSTHICIPVFRLLS. The helical transmembrane segment at 270–290 threads the bilayer; sequence VLAPVACVWFISAFVGTSVIP. Over 291–319 the chain is Cytoplasmic; that stretch reads LQLSEPSDAPWFWLPHPGEWEWPLLTPRA. A helical membrane pass occupies residues 320–340; it reads LAAGISMALAASTSSLGCYAL. Residues 341–358 lie on the Extracellular side of the membrane; sequence CGQLLRLSPPPPHACSRG. A helical transmembrane segment spans residues 359–379; that stretch reads LSLEGLGSVLAGLLGSPLGTA. The Cytoplasmic portion of the chain corresponds to 380–397; that stretch reads SSFPNVGTVSLFQTGSRR. Residues 398–417 form a helical membrane-spanning segment; that stretch reads VAHLVGLFCMGLGLSPRLAQ. Topologically, residues 418–426 are extracellular; that stretch reads LFTSIPLPV. A helical membrane pass occupies residues 427 to 449; sequence LGGVLGVTQAVVLSAGFSSFHLA. Residues 450-455 lie on the Cytoplasmic side of the membrane; that stretch reads DIDSGR. The chain crosses the membrane as a helical span at residues 456-475; that stretch reads NVFIVGFSIFMALLLPRWLR. Residues 476–489 lie on the Extracellular side of the membrane; that stretch reads EAPVLLNTGWSPLD. The chain crosses the membrane as a helical span at residues 490–510; sequence MFLRSLLAEPIFLAGLLGFLL. Topologically, residues 511 to 611 are cytoplasmic; the sequence is ENTISGTRAE…TASREGVRSQ (101 aa). The tract at residues 574-611 is disordered; it reads PEDSGDEGGSSKTGERADLLPNSGESYSTASREGVRSQ. Residues 596–605 are compositionally biased toward polar residues; the sequence is SGESYSTASR.

It belongs to the nucleobase:cation symporter-2 (NCS2) (TC 2.A.40) family.

It localises to the membrane. Its subcellular location is the cytoplasm. The enzyme catalyses hypoxanthine(out) + Na(+)(out) = hypoxanthine(in) + Na(+)(in). Acts as a sodium-dependent hypoxanthine transporter. May show xanthine-hypoxanthine exchange activity. The polypeptide is Solute carrier family 23 member 3 (Slc23a3) (Mus musculus (Mouse)).